A 140-amino-acid chain; its full sequence is Large ribosomal subunit protein uL14 (140 aa).

Belongs to the universal ribosomal protein uL14 family.

This is Large ribosomal subunit protein uL14 (RPL23) from Nicotiana tabacum (Common tobacco).